Consider the following 369-residue polypeptide: Probable N-acetyltransferase 16 (369 aa).

The tract at residues 1–49 is disordered; that stretch reads MKLEASCGTATSEVPKPEKKTARDAEPSSETRPQEVEAEPRSGSGPEAE. Residues 15–26 show a composition bias toward basic and acidic residues; that stretch reads PKPEKKTARDAE. One can recognise an N-acetyltransferase domain in the interval 53 to 188; that stretch reads LDFVVATERE…QGILLVRFNA (136 aa).

Its function is as follows. Probable N-acetyltransferase. Shows only trace activity toward L-His and no N-acetyltransferase activity toward other amino acids. The physiological substrate of this enzyme is unknown. The chain is Probable N-acetyltransferase 16 (NAT16) from Homo sapiens (Human).